The primary structure comprises 380 residues: Cytochrome b (380 aa).

The next 4 membrane-spanning stretches (helical) occupy residues 34-54 (FGSL…FLAM), 78-99 (WLLR…YFHI), 114-134 (WNIG…GYVL), and 179-199 (FFTF…INLL). 2 residues coordinate heme b: H84 and H98. Residue H183 coordinates heme b. An a ubiquinone-binding site is contributed by H202. Transmembrane regions (helical) follow at residues 227-247 (YKDL…STFA), 289-309 (LGGV…PIIH), 321-341 (IAKT…WIGG), and 348-368 (FITI…LLIP).

The protein belongs to the cytochrome b family. As to quaternary structure, the cytochrome bc1 complex contains 3 respiratory subunits (MT-CYB, CYC1 and UQCRFS1), 2 core proteins (UQCRC1 and UQCRC2) and probably 6 low-molecular weight proteins. Heme b serves as cofactor.

Its subcellular location is the mitochondrion inner membrane. Its function is as follows. Component of the ubiquinol-cytochrome c reductase complex (complex III or cytochrome b-c1 complex) that is part of the mitochondrial respiratory chain. The b-c1 complex mediates electron transfer from ubiquinol to cytochrome c. Contributes to the generation of a proton gradient across the mitochondrial membrane that is then used for ATP synthesis. The polypeptide is Cytochrome b (mt-cyb) (Pelophylax plancyi (Korean pond frog)).